Here is a 315-residue protein sequence, read N- to C-terminus: Probable cytosolic iron-sulfur protein assembly protein CIAO1 homolog (315 aa).

7 WD repeats span residues 11 to 50 (GHED…WVCK), 56 to 95 (GHQR…FESC), 100 to 139 (GHEN…EFEC), 145 to 188 (CHSQ…CTLD), 189 to 229 (KHAS…RSWE), 236 to 275 (RHPR…CSWR), and 283 to 315 (AHSQ…WQID).

It belongs to the WD repeat CIA1 family.

Functionally, essential component of the cytosolic iron-sulfur (Fe/S) protein assembly machinery. Required for the maturation of extramitochondrial Fe/S proteins. The chain is Probable cytosolic iron-sulfur protein assembly protein CIAO1 homolog from Ixodes scapularis (Black-legged tick).